Here is a 123-residue protein sequence, read N- to C-terminus: Probable cytochrome c 2.2 (123 aa).

The tract at residues 1–21 is disordered; that stretch reads MGKKKSDTASGGAIPEGDNEK. The heme c site is built by C30, C33, H34, and M95.

This sequence belongs to the cytochrome c family. Binds 1 heme c group covalently per subunit.

It is found in the mitochondrion intermembrane space. In terms of biological role, electron carrier protein. The oxidized form of the cytochrome c heme group can accept an electron from the heme group of the cytochrome c1 subunit of cytochrome reductase. Cytochrome c then transfers this electron to the cytochrome oxidase complex, the final protein carrier in the mitochondrial electron-transport chain. The sequence is that of Probable cytochrome c 2.2 (cyc-2.2) from Caenorhabditis elegans.